A 111-amino-acid chain; its full sequence is MIGIVLVLASLLSVGGQLCQKQATRPLTTGGRRRHLMLWLGLALICMGAAMVLWLLVLQTLPVGIAYPMLSLNFVWVTLAAWKIWHEQVLPRHWLGVALIISGIIILGSAA.

3 consecutive transmembrane segments (helical) span residues 38-58, 61-81, and 89-109; these read LWLG…LLVL, LPVG…TLAA, and VLPR…ILGS. One can recognise an EamA domain in the interval 40–109; it reads LGLALICMGA…IISGIIILGS (70 aa).

It belongs to the ArnE family. As to quaternary structure, heterodimer of ArnE and ArnF.

The protein resides in the cell inner membrane. It functions in the pathway bacterial outer membrane biogenesis; lipopolysaccharide biosynthesis. Translocates 4-amino-4-deoxy-L-arabinose-phosphoundecaprenol (alpha-L-Ara4N-phosphoundecaprenol) from the cytoplasmic to the periplasmic side of the inner membrane. This chain is Probable 4-amino-4-deoxy-L-arabinose-phosphoundecaprenol flippase subunit ArnE, found in Salmonella paratyphi A (strain ATCC 9150 / SARB42).